A 430-amino-acid polypeptide reads, in one-letter code: Serine--tRNA ligase (430 aa).

231-233 (TSE) contacts L-serine. 262-264 (RSE) provides a ligand contact to ATP. Glu285 lines the L-serine pocket. 349 to 352 (EISS) lines the ATP pocket. Ser385 is a binding site for L-serine.

This sequence belongs to the class-II aminoacyl-tRNA synthetase family. Type-1 seryl-tRNA synthetase subfamily. As to quaternary structure, homodimer. The tRNA molecule binds across the dimer.

It is found in the cytoplasm. The catalysed reaction is tRNA(Ser) + L-serine + ATP = L-seryl-tRNA(Ser) + AMP + diphosphate + H(+). It catalyses the reaction tRNA(Sec) + L-serine + ATP = L-seryl-tRNA(Sec) + AMP + diphosphate + H(+). It participates in aminoacyl-tRNA biosynthesis; selenocysteinyl-tRNA(Sec) biosynthesis; L-seryl-tRNA(Sec) from L-serine and tRNA(Sec): step 1/1. Catalyzes the attachment of serine to tRNA(Ser). Is also able to aminoacylate tRNA(Sec) with serine, to form the misacylated tRNA L-seryl-tRNA(Sec), which will be further converted into selenocysteinyl-tRNA(Sec). The chain is Serine--tRNA ligase from Roseobacter denitrificans (strain ATCC 33942 / OCh 114) (Erythrobacter sp. (strain OCh 114)).